A 186-amino-acid polypeptide reads, in one-letter code: Potassium-transporting ATPase KdpC subunit (186 aa).

Residues 10 to 30 traverse the membrane as a helical segment; it reads LTIITMVLCGFLFPLAITLIG.

It belongs to the KdpC family. As to quaternary structure, the system is composed of three essential subunits: KdpA, KdpB and KdpC.

Its subcellular location is the cell membrane. Functionally, part of the high-affinity ATP-driven potassium transport (or Kdp) system, which catalyzes the hydrolysis of ATP coupled with the electrogenic transport of potassium into the cytoplasm. This subunit acts as a catalytic chaperone that increases the ATP-binding affinity of the ATP-hydrolyzing subunit KdpB by the formation of a transient KdpB/KdpC/ATP ternary complex. The chain is Potassium-transporting ATPase KdpC subunit from Staphylococcus aureus (strain COL).